A 216-amino-acid polypeptide reads, in one-letter code: DNA gyrase subunit B (216 aa).

Residues 140–216 (SELYLVEGDS…PDKLRYHKII (77 aa)) form the Toprim domain.

The protein belongs to the type II topoisomerase GyrB family. Heterotetramer, composed of two GyrA and two GyrB chains. In the heterotetramer, GyrA contains the active site tyrosine that forms a transient covalent intermediate with DNA, while GyrB binds cofactors and catalyzes ATP hydrolysis.

The protein localises to the cytoplasm. The catalysed reaction is ATP-dependent breakage, passage and rejoining of double-stranded DNA.. Its function is as follows. A type II topoisomerase that negatively supercoils closed circular double-stranded (ds) DNA in an ATP-dependent manner to modulate DNA topology and maintain chromosomes in an underwound state. Negative supercoiling favors strand separation, and DNA replication, transcription, recombination and repair, all of which involve strand separation. Also able to catalyze the interconversion of other topological isomers of dsDNA rings, including catenanes and knotted rings. Type II topoisomerases break and join 2 DNA strands simultaneously in an ATP-dependent manner. This is DNA gyrase subunit B (gyrB) from Acinetobacter venetianus (strain ATCC 31012 / DSM 23050 / BCRC 14357 / CCUG 45561 / CIP 110063 / KCTC 2702 / LMG 19082 / RAG-1).